Here is a 312-residue protein sequence, read N- to C-terminus: tRNA uridine(34) hydroxylase (312 aa).

Residues 130–225 (RGDEVVFFDG…YGEQFGNKGL (96 aa)) form the Rhodanese domain. C185 (cysteine persulfide intermediate) is an active-site residue.

Belongs to the TrhO family.

The catalysed reaction is uridine(34) in tRNA + AH2 + O2 = 5-hydroxyuridine(34) in tRNA + A + H2O. Its function is as follows. Catalyzes oxygen-dependent 5-hydroxyuridine (ho5U) modification at position 34 in tRNAs. In Corynebacterium glutamicum (strain ATCC 13032 / DSM 20300 / JCM 1318 / BCRC 11384 / CCUG 27702 / LMG 3730 / NBRC 12168 / NCIMB 10025 / NRRL B-2784 / 534), this protein is tRNA uridine(34) hydroxylase.